A 154-amino-acid chain; its full sequence is Superoxide dismutase [Cu-Zn] (154 aa).

Residues histidine 47 and histidine 64 each coordinate Cu cation. An intrachain disulfide couples cysteine 58 to cysteine 147. Zn(2+)-binding residues include histidine 64, histidine 72, histidine 81, and aspartate 84. A Cu cation-binding site is contributed by histidine 121. Arginine 144 is a binding site for substrate.

This sequence belongs to the Cu-Zn superoxide dismutase family. As to quaternary structure, homodimer. Cu cation serves as cofactor. Requires Zn(2+) as cofactor.

It is found in the cytoplasm. The catalysed reaction is 2 superoxide + 2 H(+) = H2O2 + O2. Destroys radicals which are normally produced within the cells and which are toxic to biological systems. The protein is Superoxide dismutase [Cu-Zn] (SOD1) of Pleurocordyceps sinensis (Polycephalomyces sinensis).